Reading from the N-terminus, the 1351-residue chain is Tripartite motif-containing protein 66 (1351 aa).

The segment at 105-150 adopts a B box-type 1; atypical zinc-finger fold; it reads MARNCSECKEKRAAHILCTYCNRWLCSSCTEEHRHSPVPGGPFFPR. Positions 109, 112, 133, 139, 169, 172, 192, and 197 each coordinate Zn(2+). Residues 164 to 205 form a B box-type 2 zinc finger; the sequence is DFTLYCPLHTQEVLKLFCETCDMLTCHSCLVVEHKEHRCRHV. Residues 234–304 adopt a coiled-coil conformation; the sequence is AKQIEDRIFE…IMVLNRQFEH (71 aa). 3 disordered regions span residues 542 to 608, 663 to 730, and 857 to 895; these read FGHH…CSQN, APVQ…VRKH, and CPLQSIPPVSDMQPETGSSSSSGRTSGSLCPRDGADPSL. The segment covering 560 to 588 has biased composition (pro residues); the sequence is QLPPPPPPLPHPPPPLPPPPQQPHPPLPP. A compositionally biased stretch (polar residues) spans 664–676; the sequence is PVQSQSQEETLQA. Residues 872 to 884 are compositionally biased toward low complexity; sequence TGSSSSSGRTSGS. Residues 995 to 999 carry the PxVxL motif motif; it reads PYVRL. The disordered stretch occupies residues 1067–1098; sequence TSLAGQRPPEVEGTSPEEHRLIPRTPGAKKGP. Residues 1105–1152 form a PHD-type zinc finger; it reads EDFCAVCLNGGELLCCDRCPKVFHLSCHVPALLSFPGGEWVCTLCRSL. Positions 1176 to 1282 constitute a Bromo domain; the sequence is GLSMYDQKKC…VFFEGWLKEI (107 aa). The disordered stretch occupies residues 1289 to 1351; that stretch reads AQPRQEDSDS…FRLANSISQV (63 aa).

As to quaternary structure, can form homodimers and heterodimers. Interacts with CBX5, CBX1 and CBX3 via PxVxL motif.

It is found in the nucleus. In terms of biological role, may function as transcription repressor; The repressive effects are mediated, at least in part, by recruitment of deacetylase activity. May play a role as negative regulator of postmeiotic genes acting through CBX3 complex formation and centromere association. This Homo sapiens (Human) protein is Tripartite motif-containing protein 66 (TRIM66).